Reading from the N-terminus, the 285-residue chain is Bifunctional protein FolD (285 aa).

Residues 165-167 (GRS) and Ser190 each bind NADP(+).

Belongs to the tetrahydrofolate dehydrogenase/cyclohydrolase family. As to quaternary structure, homodimer.

The enzyme catalyses (6R)-5,10-methylene-5,6,7,8-tetrahydrofolate + NADP(+) = (6R)-5,10-methenyltetrahydrofolate + NADPH. It catalyses the reaction (6R)-5,10-methenyltetrahydrofolate + H2O = (6R)-10-formyltetrahydrofolate + H(+). Its pathway is one-carbon metabolism; tetrahydrofolate interconversion. Its function is as follows. Catalyzes the oxidation of 5,10-methylenetetrahydrofolate to 5,10-methenyltetrahydrofolate and then the hydrolysis of 5,10-methenyltetrahydrofolate to 10-formyltetrahydrofolate. The protein is Bifunctional protein FolD of Burkholderia ambifaria (strain ATCC BAA-244 / DSM 16087 / CCUG 44356 / LMG 19182 / AMMD) (Burkholderia cepacia (strain AMMD)).